A 490-amino-acid chain; its full sequence is tRNA modification GTPase MnmE (490 aa).

Positions 23, 80, and 133 each coordinate (6S)-5-formyl-5,6,7,8-tetrahydrofolate. The region spanning 229–412 (GIEVVIAGQP…LRRILLEVAG (184 aa)) is the TrmE-type G domain. Asn-239 is a binding site for K(+). GTP is bound by residues 239–244 (NAGKSS), 258–264 (TPVAGTT), and 283–286 (DTAG). Mg(2+) is bound at residue Ser-243. K(+)-binding residues include Thr-258, Val-260, and Thr-263. Thr-264 is a Mg(2+) binding site. Residues 366 to 382 (PTAPTESAAVPPASARP) are compositionally biased toward low complexity. The interval 366–388 (PTAPTESAAVPPASARPAPAPRP) is disordered. Residue 393–395 (SAR) coordinates GTP. Lys-490 contributes to the (6S)-5-formyl-5,6,7,8-tetrahydrofolate binding site.

The protein belongs to the TRAFAC class TrmE-Era-EngA-EngB-Septin-like GTPase superfamily. TrmE GTPase family. In terms of assembly, homodimer. Heterotetramer of two MnmE and two MnmG subunits. Requires K(+) as cofactor.

The protein localises to the cytoplasm. Exhibits a very high intrinsic GTPase hydrolysis rate. Involved in the addition of a carboxymethylaminomethyl (cmnm) group at the wobble position (U34) of certain tRNAs, forming tRNA-cmnm(5)s(2)U34. This is tRNA modification GTPase MnmE from Verminephrobacter eiseniae (strain EF01-2).